The chain runs to 1372 residues: DNA-directed RNA polymerase subunit beta (1372 aa).

It belongs to the RNA polymerase beta chain family. In terms of assembly, the RNAP catalytic core consists of 2 alpha, 1 beta, 1 beta' and 1 omega subunit. When a sigma factor is associated with the core the holoenzyme is formed, which can initiate transcription.

The catalysed reaction is RNA(n) + a ribonucleoside 5'-triphosphate = RNA(n+1) + diphosphate. DNA-dependent RNA polymerase catalyzes the transcription of DNA into RNA using the four ribonucleoside triphosphates as substrates. The protein is DNA-directed RNA polymerase subunit beta of Nitratidesulfovibrio vulgaris (strain DSM 19637 / Miyazaki F) (Desulfovibrio vulgaris).